A 485-amino-acid polypeptide reads, in one-letter code: Glutamyl-tRNA(Gln) amidotransferase subunit A (485 aa).

Residues Lys76 and Ser155 each act as charge relay system in the active site. The active-site Acyl-ester intermediate is Ser179.

It belongs to the amidase family. GatA subfamily. Heterotrimer of A, B and C subunits.

It carries out the reaction L-glutamyl-tRNA(Gln) + L-glutamine + ATP + H2O = L-glutaminyl-tRNA(Gln) + L-glutamate + ADP + phosphate + H(+). Functionally, allows the formation of correctly charged Gln-tRNA(Gln) through the transamidation of misacylated Glu-tRNA(Gln) in organisms which lack glutaminyl-tRNA synthetase. The reaction takes place in the presence of glutamine and ATP through an activated gamma-phospho-Glu-tRNA(Gln). The sequence is that of Glutamyl-tRNA(Gln) amidotransferase subunit A from Marinobacter nauticus (strain ATCC 700491 / DSM 11845 / VT8) (Marinobacter aquaeolei).